The sequence spans 494 residues: MPPAIGGPVGYTPPDGGWGWAVVVGAFISIGFSYAFPKSITVFFKEIEIIFSATTSEVSWISSIMLAVMYAGGPISSILVNKYGSRPVMIAGGCLSGCGLIAASFCNTVQELYFCIGVIGGLGLAFNLNPALTMIGKYFYKKRPLANGLAMAGSPVFLSTLAPLNQAFFGIFGWRGSFLILGGLLLNCCVAGSLMRPIGPQQGKVEKLKSKESLQEAGKSDANTDLIGGSPKGEKLSVFQTVNKFLDLSLFTHRGFLLYLSGNVVMFFGLFTPLVFLSNYGKSKHFSSEKSAFLLSILAFVDMVARPSMGLAANTRWIRPRVQYFFAASVVANGVCHLLAPLSTTYVGFCIYAGVFGFAFGWLSSVLFETLMDLVGPQRFSSAVGLVTIVECCPVLLGPPLLGRLNDMYGDYKYTYWACGVILIIAGLYLFIGMGINYRLVAKEQKAEEKKRDGKEDETSTDVDEKPKKTMKETQSPAPLQNSSGDPAEEESPV.

Residues 1–22 (MPPAIGGPVGYTPPDGGWGWAV) are Cytoplasmic-facing. A helical transmembrane segment spans residues 23–44 (VVGAFISIGFSYAFPKSITVFF). Residue Lys38 participates in (S)-lactate binding. Topologically, residues 45–55 (KEIEIIFSATT) are extracellular. The chain crosses the membrane as a helical span at residues 56–80 (SEVSWISSIMLAVMYAGGPISSILV). The Cytoplasmic segment spans residues 81-84 (NKYG). A helical membrane pass occupies residues 85–105 (SRPVMIAGGCLSGCGLIAASF). At 106–109 (CNTV) the chain is on the extracellular side. Residues 110 to 132 (QELYFCIGVIGGLGLAFNLNPAL) form a helical membrane-spanning segment. The Cytoplasmic portion of the chain corresponds to 133–146 (TMIGKYFYKKRPLA). Residues 147 to 169 (NGLAMAGSPVFLSTLAPLNQAFF) form a helical membrane-spanning segment. Residues 170–174 (GIFGW) are Extracellular-facing. The helical transmembrane segment at 175 to 194 (RGSFLILGGLLLNCCVAGSL) threads the bilayer. At 195 to 254 (MRPIGPQQGKVEKLKSKESLQEAGKSDANTDLIGGSPKGEKLSVFQTVNKFLDLSLFTHR) the chain is on the cytoplasmic side. Ser210, Ser213, and Ser220 each carry phosphoserine. Thr224 carries the post-translational modification Phosphothreonine. Ser230 carries the post-translational modification Phosphoserine. Residues 255 to 281 (GFLLYLSGNVVMFFGLFTPLVFLSNYG) traverse the membrane as a helical segment. Residues 282 to 288 (KSKHFSS) lie on the Extracellular side of the membrane. The chain crosses the membrane as a helical span at residues 289 to 310 (EKSAFLLSILAFVDMVARPSMG). Asp302 contacts H(+). Residue Arg306 participates in (S)-lactate binding. Over 311-321 (LAANTRWIRPR) the chain is Cytoplasmic. Residues 322–342 (VQYFFAASVVANGVCHLLAPL) traverse the membrane as a helical segment. At 343–346 (STTY) the chain is on the extracellular side. The chain crosses the membrane as a helical span at residues 347-368 (VGFCIYAGVFGFAFGWLSSVLF). The Cytoplasmic segment spans residues 369–382 (ETLMDLVGPQRFSS). Residues 383–403 (AVGLVTIVECCPVLLGPPLLG) traverse the membrane as a helical segment. The Extracellular portion of the chain corresponds to 404 to 414 (RLNDMYGDYKY). The chain crosses the membrane as a helical span at residues 415-436 (TYWACGVILIIAGLYLFIGMGI). Over 437–494 (NYRLVAKEQKAEEKKRDGKEDETSTDVDEKPKKTMKETQSPAPLQNSSGDPAEEESPV) the chain is Cytoplasmic. The segment covering 446-472 (KAEEKKRDGKEDETSTDVDEKPKKTMK) has biased composition (basic and acidic residues). The tract at residues 446 to 494 (KAEEKKRDGKEDETSTDVDEKPKKTMKETQSPAPLQNSSGDPAEEESPV) is disordered. Thr459 is subject to Phosphothreonine. Phosphoserine is present on Ser460. Thr461 is subject to Phosphothreonine. Over residues 473-485 (ETQSPAPLQNSSG) the composition is skewed to polar residues. Residues Ser476, Ser483, Ser484, and Ser492 each carry the phosphoserine modification.

The protein belongs to the major facilitator superfamily. Monocarboxylate porter (TC 2.A.1.13) family. Interacts with BSG. Interacts with EMB. Interaction with either BSG or EMB is required for expression at the cell membrane. Detected in erythrocytes (at protein level). Detected in brain, heart, kidney, lung, muscle, jejunum enterocytes and brain capillaries.

The protein localises to the cell membrane. It is found in the basolateral cell membrane. The protein resides in the apical cell membrane. The catalysed reaction is (S)-lactate(in) + H(+)(in) = (S)-lactate(out) + H(+)(out). The enzyme catalyses pyruvate(out) + H(+)(out) = pyruvate(in) + H(+)(in). It catalyses the reaction acetoacetate(out) + H(+)(out) = acetoacetate(in) + H(+)(in). It carries out the reaction (S)-3-hydroxybutanoate(out) + H(+)(out) = (S)-3-hydroxybutanoate(in) + H(+)(in). The catalysed reaction is (R)-3-hydroxybutanoate(out) + H(+)(out) = (R)-3-hydroxybutanoate(in) + H(+)(in). The enzyme catalyses 3-methyl-2-oxobutanoate(out) + H(+)(out) = 3-methyl-2-oxobutanoate(in) + H(+)(in). It catalyses the reaction 4-methyl-2-oxopentanoate(out) + H(+)(out) = 4-methyl-2-oxopentanoate(in) + H(+)(in). Inhibited by stilbene disulfonates, such as di-isothiocyanostilbene disulfonate(DIDS), a cross-linking reagent that forms covalent linkages with lysine groups. Bidirectional proton-coupled monocarboxylate transporter. Catalyzes the rapid transport across the plasma membrane of many monocarboxylates such as lactate, pyruvate, acetate and the ketone bodies acetoacetate and beta-hydroxybutyrate, and thus contributes to the maintenance of intracellular pH. The transport direction is determined by the proton motive force and the concentration gradient of the substrate monocarboxylate. MCT1 is a major lactate exporter. Plays a role in cellular responses to a high-fat diet by modulating the cellular levels of lactate and pyruvate that contribute to the regulation of central metabolic pathways and insulin secretion, with concomitant effects on plasma insulin levels and blood glucose homeostasis. Facilitates the protonated monocarboxylate form of succinate export, that its transient protonation upon muscle cell acidification in exercising muscle and ischemic heart. Functions via alternate outward- and inward-open conformation states. Protonation and deprotonation of 302-Asp is essential for the conformational transition. The sequence is that of Monocarboxylate transporter 1 (Slc16a1) from Rattus norvegicus (Rat).